Consider the following 202-residue polypeptide: MAKVSVLNVAVLENPSPFHSPFRFEISFECNEALADDLEWKIIYVGSAESEEFDQILDSVLVGPVPAGRHMFVFQADAPNPSLIPETDAVGVTVVLITCTYHGQEFIRVGYYVNNEYLSPELRENPPLKPDFSQLQRNILASNPRVTRFHINWDNNMDRLEAIENQDSSLGCGLPLSCTPIKGLGLPSCIPGLLPENSMDCI.

An interaction with histone H3 and CHAF1B region spans residues 1–156 (MAKVSVLNVA…TRFHINWDNN (156 aa)). Residue S198 is modified to Phosphoserine; by TLK2.

The protein belongs to the ASF1 family. Interacts with histone H3 (via C-terminus), including histone H3.1, H3.2 and H3.3, and histone H4; the interaction with H3 is direct. Interacts with the CHAF1A, CHAF1B and RBBP4 subunits of the CAF-1 complex. Interacts with HAT1, NASP and TAF1. Found in a soluble complex with NASP and histones H3 and H4; the interaction with NASP is probably indirect and mediated by H3-H4. Interacts with CDAN1. Found in a cytosolic complex with CDAN1, ASF1A, IPO4 and histones H3.1 and H4. Interacts with CREBBP. Phosphorylated by TLK1 and TLK2.

The protein localises to the nucleus. It is found in the cytoplasm. Its subcellular location is the cytosol. In terms of biological role, histone chaperone that facilitates histone deposition and histone exchange and removal during nucleosome assembly and disassembly. Cooperates with chromatin assembly factor 1 (CAF-1) to promote replication-dependent chromatin assembly. Also involved in the nuclear import of the histone H3-H4 dimer together with importin-4 (IPO4): specifically recognizes and binds newly synthesized histones with the monomethylation of H3 'Lys-9' (H3K9me1) and diacetylation at 'Lys-5' and 'Lys-12' of H4 (H4K5ac and H4K12ac) marks in the cytosol. Does not participate in replication-independent nucleosome deposition which is mediated by ASF1A and HIRA. Required for gonad development. This Bos taurus (Bovine) protein is Histone chaperone ASF1B (ASF1B).